The primary structure comprises 155 residues: Putative methyl-CpG-binding domain protein 12 (155 aa).

The CW-type zinc-finger motif lies at M1–T53. The MBD-associated domain (MAD) signature appears at Q3–C45. Zn(2+)-binding residues include C4, C7, C33, and C45. The MBD domain maps to T53–P126. Residues N130–K155 form a disordered region. Positions K133–S144 are enriched in basic residues. A Nuclear localization signal motif is present at residues K140–D147. The segment covering S145 to K155 has biased composition (basic and acidic residues).

It is found in the nucleus. Probable transcriptional regulator. This is Putative methyl-CpG-binding domain protein 12 (MBD12) from Arabidopsis thaliana (Mouse-ear cress).